A 459-amino-acid chain; its full sequence is Fibrinogen C domain-containing protein 1 (459 aa).

Positions 1-22 (MVHERWKTVGSASQLEDRPRDK) are disordered. Residues 1–33 (MVHERWKTVGSASQLEDRPRDKPQRASCSYVLC) lie on the Cytoplasmic side of the membrane. Residues 34-54 (TVLLSLAVLLAVAVTGVVLFL) form a helical; Signal-anchor for type II membrane protein membrane-spanning segment. The Extracellular segment spans residues 55 to 459 (NHTHTPGTAP…MKIRPVREDR (405 aa)). The Fibrinogen C-terminal domain maps to 233-456 (CANGSRPRDC…FSEMKIRPVR (224 aa)). A disulfide bridge connects residues C242 and C271. Residue N338 is glycosylated (N-linked (GlcNAc...) asparagine). Ca(2+) is bound by residues D391 and D393. C399 and C412 are joined by a disulfide.

Homotetramer; disulfide-linked.

The protein resides in the membrane. Acetyl group-binding receptor which shows a high-affinity and calcium-dependent binding to acetylated structures such as chitin, some N-acetylated carbohydrates, and amino acids, but not to their non-acetylated counterparts. Can facilitate the endocytosis of acetylated components. This is Fibrinogen C domain-containing protein 1 (Fibcd1) from Mus musculus (Mouse).